The primary structure comprises 338 residues: RNA 3'-terminal phosphate cyclase (338 aa).

ATP-binding positions include Q103 and 283–287 (YLADQ). The active-site Tele-AMP-histidine intermediate is H308.

This sequence belongs to the RNA 3'-terminal cyclase family. Type 1 subfamily.

It localises to the cytoplasm. It catalyses the reaction a 3'-end 3'-phospho-ribonucleotide-RNA + ATP = a 3'-end 2',3'-cyclophospho-ribonucleotide-RNA + AMP + diphosphate. Its function is as follows. Catalyzes the conversion of 3'-phosphate to a 2',3'-cyclic phosphodiester at the end of RNA. The mechanism of action of the enzyme occurs in 3 steps: (A) adenylation of the enzyme by ATP; (B) transfer of adenylate to an RNA-N3'P to produce RNA-N3'PP5'A; (C) and attack of the adjacent 2'-hydroxyl on the 3'-phosphorus in the diester linkage to produce the cyclic end product. The biological role of this enzyme is unknown but it is likely to function in some aspects of cellular RNA processing. This Escherichia coli (strain SMS-3-5 / SECEC) protein is RNA 3'-terminal phosphate cyclase.